A 185-amino-acid polypeptide reads, in one-letter code: Ribosome-recycling factor (185 aa).

The protein belongs to the RRF family.

The protein localises to the cytoplasm. Functionally, responsible for the release of ribosomes from messenger RNA at the termination of protein biosynthesis. May increase the efficiency of translation by recycling ribosomes from one round of translation to another. The protein is Ribosome-recycling factor of Thermosipho africanus (strain TCF52B).